Reading from the N-terminus, the 368-residue chain is Cyclic di-GMP phosphodiesterase TM_0186 (368 aa).

The region spanning Thr-2–Leu-114 is the Response regulatory domain. A 4-aspartylphosphate modification is found at Asp-49. The region spanning Tyr-148 to Asp-345 is the HD-GYP domain. Glu-169, His-173, His-205, Asp-206, His-234, His-260, His-261, and Asp-289 together coordinate a divalent metal cation. The interval Arg-341–Arg-368 is disordered. Residues His-350–Pro-360 are compositionally biased toward polar residues.

It carries out the reaction 3',3'-c-di-GMP + 2 H2O = 2 GMP + 2 H(+). Can function in vivo with either divalent iron or manganese occupying di- and trimetal sites. Dimetal is necessary and sufficient to catalyze conversion of c-di-GMP to pGpG, but conversion of pGpG to GMP requires an occupied trimetal site. Functionally, phosphodiesterase (PDE) that catalyzes the hydrolysis of cyclic diguanylate (c-di-GMP) to GMP. Hydrolyzes c-di-GMP to GMP in a two-step reaction, via the linear intermediate 5'-phosphoguanylyl(3'-&gt;5')guanosine (pGpG). This Thermotoga maritima (strain ATCC 43589 / DSM 3109 / JCM 10099 / NBRC 100826 / MSB8) protein is Cyclic di-GMP phosphodiesterase TM_0186.